A 273-amino-acid chain; its full sequence is uncharacterized protein (273 aa).

The protein belongs to the PhyH family.

This is an uncharacterized protein from Mycobacterium tuberculosis (strain ATCC 25618 / H37Rv).